The chain runs to 452 residues: Sensor histidine kinase HprS (452 aa).

The Cytoplasmic portion of the chain corresponds to 1–9 (MKRLSITVR). A helical transmembrane segment spans residues 10–30 (LTLLFILLLSVAGAGIVWTLY). The Periplasmic portion of the chain corresponds to 31-158 (NGLASELKWR…ARHNMLEQYK (128 aa)). The chain crosses the membrane as a helical span at residues 159-179 (INSIIICIVAIVLCSVLSPLL). Topologically, residues 180–452 (IRTGLREIKK…VFRITLPQRN (273 aa)) are cytoplasmic. Residues 181–234 (RTGLREIKKLSGVTEALNYNDSREPVEVSALPRELKPLGQALNKMHHALVKDFE) form the HAMP domain. In terms of domain architecture, Histidine kinase spans 242 to 452 (DLAHELRTPI…VFRITLPQRN (211 aa)). Position 245 is a phosphohistidine; by autocatalysis (histidine 245).

Autophosphorylated.

The protein resides in the cell inner membrane. The catalysed reaction is ATP + protein L-histidine = ADP + protein N-phospho-L-histidine.. Its function is as follows. Member of a two-component regulatory system HprR/HprS involved in response to hydrogen peroxide. Senses H(2)O(2), maybe via the redox state of the membrane. Activates HprR by phosphorylation. Can also phosphorylate CusR. The sequence is that of Sensor histidine kinase HprS from Escherichia coli (strain K12).